Consider the following 85-residue polypeptide: MAEKQRQLKLQKIYKQKYIGLGDESTTREQWQRNVRNDTLNTLQGHSASLEYVSLSRGDLSIRDTRIHLLKSMSPGYKAYLREER.

As to quaternary structure, belongs to the SF3b complex composed of CUS1, HSH49, HSH155, RCP1, RDS3 and RSE1.

It is found in the nucleus. Involved in pre-mRNA splicing. Required for the SF3b integrity and prespliceosome assembly. The chain is RDS3 complex subunit 10 (YSF3) from Saccharomyces cerevisiae (strain ATCC 204508 / S288c) (Baker's yeast).